The following is a 545-amino-acid chain: 4-coumarate--CoA ligase 2 (545 aa).

6 residues coordinate ATP: Ser-192, Ser-193, Gly-194, Thr-195, Thr-196, and Lys-200. (E)-4-coumaroyl-AMP-binding residues include Tyr-242 and Ser-246. CoA is bound at residue Lys-263. Residues 265 to 334 (DIAQFLELIP…AKFPNAKLGQ (70 aa)) are SBD1. Positions 312, 334, 335, 339, and 347 each coordinate (E)-4-coumaroyl-AMP. ATP is bound by residues Gln-334, Gly-335, and Thr-339. Positions 335–402 (GYGMTEAGPV…IRGDQIMKGY (68 aa)) are SBD2. Residues Asp-423 and Arg-438 each contribute to the ATP site. Residues Lys-440 and Lys-444 each coordinate (E)-4-coumaroyl-AMP. CoA contacts are provided by Lys-446 and Gly-447. An ATP-binding site is contributed by Lys-529.

Belongs to the ATP-dependent AMP-binding enzyme family. The cofactor is Mg(2+).

The catalysed reaction is (E)-4-coumarate + ATP + CoA = (E)-4-coumaroyl-CoA + AMP + diphosphate. It catalyses the reaction (E)-4-coumarate + ATP + H(+) = (E)-4-coumaroyl-AMP + diphosphate. The enzyme catalyses (E)-4-coumaroyl-AMP + CoA = (E)-4-coumaroyl-CoA + AMP + H(+). It participates in phytoalexin biosynthesis; 3,4',5-trihydroxystilbene biosynthesis; 3,4',5-trihydroxystilbene from trans-4-coumarate: step 1/2. Functionally, carboxylate--CoA ligase that may use 4-coumarate as substrate. Follows a two-step reaction mechanism, wherein the carboxylate substrate first undergoes adenylation by ATP, followed by a thioesterification in the presence of CoA to yield the final CoA thioester. The sequence is that of 4-coumarate--CoA ligase 2 (4CL2) from Solanum tuberosum (Potato).